Consider the following 271-residue polypeptide: Proteasome inhibitor PI31 subunit (271 aa).

Ala-2 is modified (N-acetylalanine). The interval 2–150 (AGLEVLFASA…PIHEQWEKAN (149 aa)) is important for homodimerization and interaction with FBXO7. Ser-153 is subject to Phosphoserine. Position 205 is an omega-N-methylarginine (Arg-205). Residue Arg-219 is modified to Asymmetric dimethylarginine. Residues 222–271 (IDPSSGLPNRLPPGAVPPGARFDPFGPIGTSPPGPNPDHLPPPGYDDMYL) are disordered. Arg-231 carries the omega-N-methylarginine modification. Over residues 251 to 265 (TSPPGPNPDHLPPPG) the composition is skewed to pro residues. A Phosphoserine modification is found at Ser-252.

The protein belongs to the proteasome inhibitor PI31 family. Monomer and homodimer. Interacts with FBXO7.

The protein resides in the cytoplasm. Its subcellular location is the endoplasmic reticulum. In terms of biological role, plays an important role in control of proteasome function. Inhibits the hydrolysis of protein and peptide substrates by the 20S proteasome. Also inhibits the activation of the proteasome by the proteasome regulatory proteins PA700 and PA28. In Pongo abelii (Sumatran orangutan), this protein is Proteasome inhibitor PI31 subunit (PSMF1).